We begin with the raw amino-acid sequence, 108 residues long: UPF0060 membrane protein Nham_2004 (108 aa).

4 helical membrane-spanning segments follow: residues 5-25, 31-51, 61-81, and 88-108; these read AAYV…WAWL, VWWL…LTLV, AAYG…VEGL, and LTGA…PRQI.

This sequence belongs to the UPF0060 family.

It is found in the cell inner membrane. The chain is UPF0060 membrane protein Nham_2004 from Nitrobacter hamburgensis (strain DSM 10229 / NCIMB 13809 / X14).